The chain runs to 262 residues: Shikimate dehydrogenase (NADP(+)) (262 aa).

Residues 15 to 17 and Thr62 each bind shikimate; that span reads SRS. Lys66 (proton acceptor) is an active-site residue. Glu78 lines the NADP(+) pocket. Residues Asn87 and Asp102 each coordinate shikimate. Residues 126–130, 150–155, and Met214 each bind NADP(+); these read GAGGA and NRTLAR. Shikimate is bound at residue Tyr216. Position 236 (Gly236) interacts with NADP(+).

This sequence belongs to the shikimate dehydrogenase family. Homodimer.

The catalysed reaction is shikimate + NADP(+) = 3-dehydroshikimate + NADPH + H(+). The protein operates within metabolic intermediate biosynthesis; chorismate biosynthesis; chorismate from D-erythrose 4-phosphate and phosphoenolpyruvate: step 4/7. Its function is as follows. Involved in the biosynthesis of the chorismate, which leads to the biosynthesis of aromatic amino acids. Catalyzes the reversible NADPH linked reduction of 3-dehydroshikimate (DHSA) to yield shikimate (SA). The protein is Shikimate dehydrogenase (NADP(+)) of Acinetobacter baumannii (strain AB0057).